The following is a 63-amino-acid chain: Large ribosomal subunit protein uL29 (63 aa).

It belongs to the universal ribosomal protein uL29 family.

This is Large ribosomal subunit protein uL29 from Idiomarina loihiensis (strain ATCC BAA-735 / DSM 15497 / L2-TR).